Reading from the N-terminus, the 436-residue chain is Bystin (436 aa).

Positions 1–105 (MPKLKVTRGA…GSDEEDEEWP (105 aa)) are disordered. Ser-54 is subject to Phosphoserine. The span at 70–86 (TEHATGDRPAKPRERAT) shows a compositional bias: basic and acidic residues. A compositionally biased stretch (acidic residues) spans 96 to 105 (GSDEEDEEWP). Residue Ser-97 is modified to Phosphoserine. Thr-155 carries the phosphothreonine modification. Ser-166 and Ser-413 each carry phosphoserine.

This sequence belongs to the bystin family. In terms of assembly, binds trophinin, tastin and cytokeratins.

It localises to the cytoplasm. It is found in the nucleus. The protein localises to the nucleolus. Its function is as follows. Required for processing of 20S pre-rRNA precursor and biogenesis of 40S ribosomal subunits. The chain is Bystin from Rattus norvegicus (Rat).